Reading from the N-terminus, the 598-residue chain is MSDRTRTTRYANGSLRTCQNCARAKIRCIRSVPTGSCDRCERLRKTCQFQPGRRANAGPSLSESKDRRIDALEAKLDRLLAQSTSATVSEASIDDKSPTTTPTTPRPPPDVIDSGLLTLEAASLLLQDYQRTLMPYCPFVMVPSPATAATLRRDKPFLFLAILTAALYDNMPLQRTLELEVKRTIGRCMIFDGPVSFDMLQGLLVHLAWCQYHSRPRRFSQYLHLAISIITDLQLDRAPEDRFWRTRVDFNGELDREISWGREERRAVVGFFWFSSSISQILQKRSSFSFIPYLETSCELLASTAEYDSDQHLLQLIQLQRLSERIIVASGQHTSEPHDADALEQCYRDRRSELDLYLAQLPFPLTDSHLLMMQYHTVELYLCQVTLFDHKPSAQRPRHDSPFPIEALRMGLTAARTLLDFYISLPLRREVAFNNAGWVQLGFVVTLACKLAVAAADPHIHPHMADLTRALDLSTMLSRCILRIQALVTSQMDARGDRDVFYHYEKRLKRAQWWFESRSLSRSQQQRNEPLPVAGAGEASSPRNARIAEIPAEEEFQVGYAAVSGDGFDFQWPGLFPDPTFDDMFGDWMAQGSSGFDD.

Positions 18–47 (CQNCARAKIRCIRSVPTGSCDRCERLRKTC) form a DNA-binding region, zn(2)-C6 fungal-type. A disordered region spans residues 87–110 (TVSEASIDDKSPTTTPTTPRPPPD).

The protein resides in the nucleus. In terms of biological role, transcription factor that, with himB, probably co-regulates the him gene cluster that mediates the biosynthesis of himeic acid A, a ubiquitin-activating enzyme (E1) inhibitor. This chain is Transcription factor himD, found in Aspergillus japonicus.